The following is a 438-amino-acid chain: 2-(3-amino-3-carboxypropyl)histidine synthase subunit 1 (438 aa).

Residues 7–29 are disordered; sequence SGAAEQGGRDGPGRGRAPRGRVA. 3 residues coordinate [4Fe-4S] cluster: Cys-110, Cys-214, and Cys-342. A disordered region spans residues 391-421; it reads VNHGQDRRPHAPGRPARGKVQEGSARPPSAV.

It belongs to the DPH1/DPH2 family. DPH1 subfamily. As to quaternary structure, component of the 2-(3-amino-3-carboxypropyl)histidine synthase complex composed of DPH1, DPH2, DPH3 and a NADH-dependent reductase. Interacts with DPH2. Interacts with RBM8A. [4Fe-4S] cluster is required as a cofactor. As to expression, expressed in heart, brain, placenta, lung, liver, skeletal muscle, kidney, pancreas, spleen, thymus, mammary gland, colon, small intestine, testis and ovary. Reduced expression in primary breast and ovarian tumors.

It is found in the nucleus. The protein resides in the cytoplasm. It catalyses the reaction L-histidyl-[translation elongation factor 2] + S-adenosyl-L-methionine = 2-[(3S)-amino-3-carboxypropyl]-L-histidyl-[translation elongation factor 2] + S-methyl-5'-thioadenosine + H(+). The protein operates within protein modification; peptidyl-diphthamide biosynthesis. Its function is as follows. Catalyzes the first step of diphthamide biosynthesis, a post-translational modification of histidine which occurs in elongation factor 2. DPH1 and DPH2 transfer a 3-amino-3-carboxypropyl (ACP) group from S-adenosyl-L-methionine (SAM) to a histidine residue, the reaction is assisted by a reduction system comprising DPH3 and a NADH-dependent reductase. Acts as a tumor suppressor. The sequence is that of 2-(3-amino-3-carboxypropyl)histidine synthase subunit 1 from Homo sapiens (Human).